A 133-amino-acid polypeptide reads, in one-letter code: Small ribosomal subunit protein bS6 (133 aa).

Residues 106-125 are compositionally biased toward basic and acidic residues; that stretch reads REERVERAPRAPRPEVKAEP. The segment at 106-133 is disordered; the sequence is REERVERAPRAPRPEVKAEPEAEATAEA.

Belongs to the bacterial ribosomal protein bS6 family.

Functionally, binds together with bS18 to 16S ribosomal RNA. This is Small ribosomal subunit protein bS6 from Psychromonas ingrahamii (strain DSM 17664 / CCUG 51855 / 37).